The chain runs to 257 residues: Probable ABC transporter arginine-binding protein ArtJ (257 aa).

The first 23 residues, M1 to G23, serve as a signal peptide directing secretion. Residues N41, E48, G100, S102, R107, and Y151 each contribute to the L-arginine site.

It belongs to the bacterial solute-binding protein 3 family.

It is found in the secreted. It localises to the cell surface. Its function is as follows. Probably part of an ABC transporter complex involved in arginine transport. Binds arginine. Interacts with host epithelial cells, suggesting a role in host-cell adhesion during infection. The polypeptide is Probable ABC transporter arginine-binding protein ArtJ (Chlamydia trachomatis serovar D (strain ATCC VR-885 / DSM 19411 / UW-3/Cx)).